Here is a 359-residue protein sequence, read N- to C-terminus: Src kinase-associated phosphoprotein 2 (359 aa).

S5, S6, and S9 each carry phosphoserine. The segment at 67-88 (GDAEDGEEYDDPFAGPPDTISL) is disordered. Y75 carries the phosphotyrosine modification. Residues S87 and S90 each carry the phosphoserine modification. Residues 116-219 (FVLKAGYLEK…WVQQLKFVLQ (104 aa)) form the PH domain. Residues Y151 and Y197 each carry the phosphotyrosine modification. S223 is modified (phosphoserine). Y261 carries the phosphotyrosine modification. Phosphoserine is present on S286. In terms of domain architecture, SH3 spans 297-358 (DYANFYQGLW…PKAYIMEMYD (62 aa)).

This sequence belongs to the SKAP family. As to quaternary structure, interacts with FYB1, which is required for SKAP2 protein stability. Interacts with PTPNS1. Part of a complex consisting of SKAP2, FYB1 and PTPNS1. Part of a complex consisting of SKAP2, FYB1 and LILRB3. Interacts with LAT, GRB2, PTK2B, and PRAM1. May interact with actin. May interact with FYN, HCK and LYN. Interacts with FASLG.

The protein localises to the cytoplasm. Its function is as follows. May be involved in B-cell and macrophage adhesion processes. In B-cells, may act by coupling the B-cell receptor (BCR) to integrin activation. May play a role in src signaling pathway. This chain is Src kinase-associated phosphoprotein 2 (SKAP2), found in Pongo abelii (Sumatran orangutan).